Consider the following 568-residue polypeptide: Glycine--tRNA ligase (568 aa).

Substrate is bound by residues Arg97 and Glu163. ATP contacts are provided by residues 195-197 (RNE), 205-210 (IRLREF), 322-323 (EC), and 441-444 (GIDR). 210 to 214 (FTQAE) is a binding site for substrate. A substrate-binding site is contributed by 437–441 (EPSFG).

It belongs to the class-II aminoacyl-tRNA synthetase family.

The protein localises to the cytoplasm. The enzyme catalyses tRNA(Gly) + glycine + ATP = glycyl-tRNA(Gly) + AMP + diphosphate. Functionally, catalyzes the attachment of glycine to tRNA(Gly). The chain is Glycine--tRNA ligase from Pyrococcus furiosus (strain ATCC 43587 / DSM 3638 / JCM 8422 / Vc1).